Here is a 113-residue protein sequence, read N- to C-terminus: MTVNVYDLANELERGIRALPEYQALVQAKAKIDEDEEAKKLWTEFTEFQMKIQGLIQTGQAPTPEVQTEMQSFNQKIEANPLLKEYATAQQALGVYVNDIERIIFSPLQDIAK.

This sequence belongs to the UPF0342 family.

The chain is UPF0342 protein SMU_782 from Streptococcus mutans serotype c (strain ATCC 700610 / UA159).